The sequence spans 196 residues: Large ribosomal subunit protein bL9 (196 aa).

The protein belongs to the bacterial ribosomal protein bL9 family.

Binds to the 23S rRNA. The sequence is that of Large ribosomal subunit protein bL9 from Rhodopseudomonas palustris (strain HaA2).